A 226-amino-acid polypeptide reads, in one-letter code: ATP synthase F(0) complex subunit a (226 aa).

A run of 6 helical transmembrane segments spans residues Phe6–Phe26, Trp68–Leu88, Gln97–Phe117, Ile138–Val158, Ile164–Ile184, and Ala189–Ile209.

It belongs to the ATPase A chain family. As to quaternary structure, component of the ATP synthase complex composed at least of ATP5F1A/subunit alpha, ATP5F1B/subunit beta, ATP5MC1/subunit c (homooctomer), MT-ATP6/subunit a, MT-ATP8/subunit 8, ATP5ME/subunit e, ATP5MF/subunit f, ATP5MG/subunit g, ATP5MK/subunit k, ATP5MJ/subunit j, ATP5F1C/subunit gamma, ATP5F1D/subunit delta, ATP5F1E/subunit epsilon, ATP5PF/subunit F6, ATP5PB/subunit b, ATP5PD/subunit d, ATP5PO/subunit OSCP. ATP synthase complex consists of a soluble F(1) head domain (subunits alpha(3) and beta(3)) - the catalytic core - and a membrane F(0) domain - the membrane proton channel (subunits c, a, 8, e, f, g, k and j). These two domains are linked by a central stalk (subunits gamma, delta, and epsilon) rotating inside the F1 region and a stationary peripheral stalk (subunits F6, b, d, and OSCP). Interacts with DNAJC30; interaction is direct.

The protein resides in the mitochondrion inner membrane. The catalysed reaction is H(+)(in) = H(+)(out). Its function is as follows. Subunit a, of the mitochondrial membrane ATP synthase complex (F(1)F(0) ATP synthase or Complex V) that produces ATP from ADP in the presence of a proton gradient across the membrane which is generated by electron transport complexes of the respiratory chain. ATP synthase complex consist of a soluble F(1) head domain - the catalytic core - and a membrane F(1) domain - the membrane proton channel. These two domains are linked by a central stalk rotating inside the F(1) region and a stationary peripheral stalk. During catalysis, ATP synthesis in the catalytic domain of F(1) is coupled via a rotary mechanism of the central stalk subunits to proton translocation. With the subunit c (ATP5MC1), forms the proton-conducting channel in the F(0) domain, that contains two crucial half-channels (inlet and outlet) that facilitate proton movement from the mitochondrial intermembrane space (IMS) into the matrix. Protons are taken up via the inlet half-channel and released through the outlet half-channel, following a Grotthuss mechanism. The protein is ATP synthase F(0) complex subunit a of Mus musculus (Mouse).